Reading from the N-terminus, the 428-residue chain is Enolase (428 aa).

Gln-163 is a (2R)-2-phosphoglycerate binding site. Residue Glu-205 is the Proton donor of the active site. Positions 242, 283, and 310 each coordinate Mg(2+). Residues Lys-335, Arg-364, Ser-365, and Lys-386 each coordinate (2R)-2-phosphoglycerate. Residue Lys-335 is the Proton acceptor of the active site.

Belongs to the enolase family. Mg(2+) serves as cofactor.

The protein localises to the cytoplasm. It localises to the secreted. It is found in the cell surface. It catalyses the reaction (2R)-2-phosphoglycerate = phosphoenolpyruvate + H2O. The protein operates within carbohydrate degradation; glycolysis; pyruvate from D-glyceraldehyde 3-phosphate: step 4/5. Functionally, catalyzes the reversible conversion of 2-phosphoglycerate (2-PG) into phosphoenolpyruvate (PEP). It is essential for the degradation of carbohydrates via glycolysis. In Streptomyces avermitilis (strain ATCC 31267 / DSM 46492 / JCM 5070 / NBRC 14893 / NCIMB 12804 / NRRL 8165 / MA-4680), this protein is Enolase.